Consider the following 182-residue polypeptide: Large ribosomal subunit protein uL15 (182 aa).

Residues 1–52 (MDLSSLRPAKGAVKNKKRIGRGPGSGNGTTAGKGNKGQQSRSGYTRPVSEGG) are disordered. The segment covering 21–35 (RGPGSGNGTTAGKGN) has biased composition (gly residues).

It belongs to the universal ribosomal protein uL15 family. As to quaternary structure, part of the 50S ribosomal subunit.

In terms of biological role, binds to the 23S rRNA. The protein is Large ribosomal subunit protein uL15 of Chlorobium phaeobacteroides (strain BS1).